The sequence spans 272 residues: tRNA pseudouridine synthase A (272 aa).

The active-site Nucleophile is the Asp62. Tyr120 contributes to the substrate binding site.

This sequence belongs to the tRNA pseudouridine synthase TruA family. As to quaternary structure, homodimer.

It catalyses the reaction uridine(38/39/40) in tRNA = pseudouridine(38/39/40) in tRNA. Formation of pseudouridine at positions 38, 39 and 40 in the anticodon stem and loop of transfer RNAs. In Nitrosomonas europaea (strain ATCC 19718 / CIP 103999 / KCTC 2705 / NBRC 14298), this protein is tRNA pseudouridine synthase A.